The sequence spans 402 residues: Phytoene synthase 2, chloroplastic (402 aa).

The transit peptide at 1-54 (MAAGSSAVWAAQHPACSGGKFHHLSPSHSHCRPRRALQTPPALPARRSGASPPR) directs the protein to the chloroplast. Residues 20–35 (KFHHLSPSHSHCRPRR) are compositionally biased toward basic residues. Residues 20–54 (KFHHLSPSHSHCRPRRALQTPPALPARRSGASPPR) form a disordered region. A compositionally biased stretch (low complexity) spans 44–54 (PARRSGASPPR).

This sequence belongs to the phytoene/squalene synthase family. Expressed in leaves and endosperm.

It is found in the plastid. The protein localises to the chloroplast. The protein resides in the plastoglobule. It catalyses the reaction 2 (2E,6E,10E)-geranylgeranyl diphosphate = 15-cis-phytoene + 2 diphosphate. Catalyzes the conversion of geranylgeranyl diphosphate to phytoene. Mediates the first committed step in carotenoid biosynthesis. This chain is Phytoene synthase 2, chloroplastic, found in Zea mays (Maize).